A 1760-amino-acid polypeptide reads, in one-letter code: Chitin synthase csmB (1760 aa).

Residues 1 to 17 are compositionally biased toward low complexity; the sequence is MSNRFSVYSSHSTGVSS. A disordered region spans residues 1 to 23; the sequence is MSNRFSVYSSHSTGVSSARPSAP. One can recognise a Myosin motor domain in the interval 1–374; it reads MSNRFSVYSS…TVSITVVDIP (374 aa). A glycan (N-linked (GlcNAc...) asparagine) is linked at N275. A disordered region spans residues 344 to 363; that stretch reads LDNDPSTSGGSGPGGQWTDD. Residue P374 is a region of interest, actin-binding. 2 helical membrane-spanning segments follow: residues 731–751 and 767–787; these read IWVGFVWALTFWIPSFALRWI and LVLMLIILLFNGVVCFYIIAF. 3 N-linked (GlcNAc...) asparagine glycosylation sites follow: N878, N906, and N995. A helical transmembrane segment spans residues 1029–1049; it reads ILLSFTVLICAVILVKFVSAL. N1394 carries N-linked (GlcNAc...) asparagine glycosylation. The next 3 helical transmembrane spans lie at 1419–1439, 1452–1472, and 1480–1500; these read FVVLVDLLGTVILPATCVYLG, FPMISIVILAGVYGLQAIIFL, and IGWMIIYICAYPIYNFILPLY. 2 N-linked (GlcNAc...) asparagine glycosylation sites follow: N1584 and N1652. The region spanning 1702–1758 is the DEK-C domain; that stretch reads GPDEGAITEAIRACLAEVDLDTVTKKQVRALVEQRLQTTLMGDKRTFLDRQIDHELA.

This sequence in the N-terminal section; belongs to the TRAFAC class myosin-kinesin ATPase superfamily. Myosin family. It in the C-terminal section; belongs to the chitin synthase family. Class V subfamily.

The protein resides in the cell membrane. Its subcellular location is the cell septum. The protein localises to the cell tip. The catalysed reaction is [(1-&gt;4)-N-acetyl-beta-D-glucosaminyl](n) + UDP-N-acetyl-alpha-D-glucosamine = [(1-&gt;4)-N-acetyl-beta-D-glucosaminyl](n+1) + UDP + H(+). In terms of biological role, polymerizes chitin, a structural polymer of the cell wall and septum, by transferring the sugar moiety of UDP-GlcNAc to the non-reducing end of the growing chitin polymer. Plays an important role in septal growth or maintenance. Mediates colony spore formation. The polypeptide is Chitin synthase csmB (Aspergillus niger (strain ATCC MYA-4892 / CBS 513.88 / FGSC A1513)).